Reading from the N-terminus, the 210-residue chain is CLAVATA3/ESR (CLE)-related protein 4A-3 (210 aa).

The first 21 residues, Met1 to Ala21, serve as a signal peptide directing secretion. The required for secretion from the host cytoplasm to the host apoplasm stretch occupies residues Ala21–Met83. An N-linked (GlcNAc...) asparagine glycan is attached at Asn32. A disordered region spans residues Arg116–His210. Composition is skewed to basic and acidic residues over residues His125–Val137 and Pro144–Gly200. One copy of the A-1 repeat lies at Glu127 to Lys135. Residues Glu127 to Lys198 are 4 X approximate repeat A. The CLE-1 repeat unit spans residues Arg136–His147. A 4 X approximate repeat CLE region spans residues Arg136–His210. The stretch at Gln148–Lys156 is one A-2 repeat. A CLE-2 repeat occupies Arg157 to His168. One copy of the A-3 repeat lies at Glu169–Lys177. The stretch at Arg178–His189 is one CLE-3 repeat. Residues Glu190–Lys198 form an A-4 repeat. A CLE-4 repeat occupies Arg199–His210.

Belongs to the CLV3/ESR signal peptide family. In terms of tissue distribution, highly expressed exclusively within the dorsal esophageal gland cell during syncytium formation in host plants.

The protein resides in the secreted. It is found in the host cytoplasm. The protein localises to the host extracellular space. Its subcellular location is the extracellular space. It localises to the apoplast. Mimics host plant CLE extracellular signal peptides that regulate cell fate. May play a role in the differentiation or division of feeding cells (syncytia) induced in plant roots during infection. The chain is CLAVATA3/ESR (CLE)-related protein 4A-3 (CLE-4A-3) from Globodera rostochiensis (Golden nematode worm).